The chain runs to 189 residues: Protein GrpE (189 aa).

The span at 1–38 (MTKSNETERMEESEETHSSDIRSASESDHASGSDHTES) shows a compositional bias: basic and acidic residues. Residues 1–54 (MTKSNETERMEESEETHSSDIRSASESDHASGSDHTESADEIPTADAEQGELEQ) form a disordered region.

Belongs to the GrpE family. Homodimer.

It is found in the cytoplasm. In terms of biological role, participates actively in the response to hyperosmotic and heat shock by preventing the aggregation of stress-denatured proteins, in association with DnaK and GrpE. It is the nucleotide exchange factor for DnaK and may function as a thermosensor. Unfolded proteins bind initially to DnaJ; upon interaction with the DnaJ-bound protein, DnaK hydrolyzes its bound ATP, resulting in the formation of a stable complex. GrpE releases ADP from DnaK; ATP binding to DnaK triggers the release of the substrate protein, thus completing the reaction cycle. Several rounds of ATP-dependent interactions between DnaJ, DnaK and GrpE are required for fully efficient folding. The sequence is that of Protein GrpE from Tropheryma whipplei (strain Twist) (Whipple's bacillus).